Here is a 502-residue protein sequence, read N- to C-terminus: MEFSVKSGSPEKQRSACIVVGVFEPRRLSPIAEQLDKISDGYISSLLRRGDLEGKPGQMLLLHHVPNVLSERVLLVGCGKERELDERQYKQIIKKTISTLNETGSMEAVCFLTELHVKGRDTYWKVRQAVETTKDSLYTFNQFKSNKPETRRPLRKLVFNVPTRRELSLGERAITHGLAVASGVKASKDLGNMPPNVANPAYLASQARRLADDFDTVTTKIIGEQEMKELGMTSYLAVGQGSKNEAMMSVIEYKGSADPDAKPIVLIGKGLTFDSGGISIKPSAQMDEMKYDMCGAASVFGAMKSLAQLNLPINVVGVIAGCENMPGGNAYRPGDIITTMSGKTVEVLNTDAEGRLVLCDALTYVERFDPDCVVDVATLTGACVVALGHHISGLLGNHNPLAHELINASEQSGDRAWRLPMSDEYQDQISSPFADMANLGSPGAGTITAGCFLSRFTKKYNWAHLDIAGTAWVGGKEKGSTGRPVPLLVQFLLNRAGLENVE.

Mn(2+) contacts are provided by Lys-269 and Asp-274. Lys-281 is an active-site residue. Residues Asp-292, Asp-351, and Glu-353 each coordinate Mn(2+). Arg-355 is an active-site residue.

The protein belongs to the peptidase M17 family. The cofactor is Mn(2+).

It localises to the cytoplasm. The catalysed reaction is Release of an N-terminal amino acid, Xaa-|-Yaa-, in which Xaa is preferably Leu, but may be other amino acids including Pro although not Arg or Lys, and Yaa may be Pro. Amino acid amides and methyl esters are also readily hydrolyzed, but rates on arylamides are exceedingly low.. It catalyses the reaction Release of an N-terminal amino acid, preferentially leucine, but not glutamic or aspartic acids.. Presumably involved in the processing and regular turnover of intracellular proteins. Catalyzes the removal of unsubstituted N-terminal amino acids from various peptides. In Photobacterium profundum (strain SS9), this protein is Probable cytosol aminopeptidase.